The sequence spans 433 residues: Histone acetyltransferase type B subunit 2 (433 aa).

WD repeat units lie at residues 131-171, 184-224, 234-274, 281-321, and 325-365; these read EHPG…LDPT, GHEA…ADSR, HHTQ…TNKA, GHLD…EKVH, and GHND…EEQL. The interaction with the histone H4 N-terminus stretch occupies residues 367 to 371; it reads DDQDD. The WD 6 repeat unit spans residues 382 to 422; it reads GHTNHLADFSWNPNEPWLVASAAEDNLLQIWKVAESIVGKD.

Belongs to the WD repeat RBAP46/RBAP48/MSI1 family. Component of the HAT-B complex composed of at least HAT1 and HAT2. The HAT-B complex binds to histone H4 tail.

The protein localises to the cytoplasm. Its subcellular location is the nucleus. Functionally, regulatory subunit of the histone acetylase B (HAT-B) complex. The complex acetylates 'Lys-12' of histone H4 which is required for telomeric silencing. In Gibberella zeae (strain ATCC MYA-4620 / CBS 123657 / FGSC 9075 / NRRL 31084 / PH-1) (Wheat head blight fungus), this protein is Histone acetyltransferase type B subunit 2 (HAT2).